The sequence spans 524 residues: Putative ATP-dependent RNA helicase R458 (524 aa).

Residues 125–338 (VPELIQRKDT…NSYFRKYSPI (214 aa)) enclose the Helicase ATP-binding domain. 138–145 (FKSGTGKT) is an ATP binding site. The short motif at 268-271 (DEFD) is the DEFD box element. One can recognise a Helicase C-terminal domain in the interval 373–524 (IILDLLKQCR…QLPGDLSTLL (152 aa)).

Belongs to the DEAD box helicase family. eIF4A subfamily.

It carries out the reaction ATP + H2O = ADP + phosphate + H(+). Its function is as follows. Putative ATP-dependent RNA helicase. The chain is Putative ATP-dependent RNA helicase R458 from Acanthamoeba polyphaga mimivirus (APMV).